Here is a 430-residue protein sequence, read N- to C-terminus: Ethylene-responsive transcription factor WRI1 (430 aa).

Residues 1–26 are compositionally biased toward low complexity; sequence MKKRLTTSTCSSSPSSSVSSSTTTSS. The segment at 1–66 is disordered; that stretch reads MKKRLTTSTC…PASTRRSSIY (66 aa). Over residues 53-63 the composition is skewed to polar residues; sequence NPTSPASTRRS. The segment at residues 65–131 is a DNA-binding region (AP2/ERF 1); that stretch reads IYRGVTRHRW…WGPDTILNFP (67 aa). Phosphothreonine; by KIN10 is present on threonine 70. At serine 166 the chain carries Phosphoserine; by KIN10. A DNA-binding region (AP2/ERF 2) is located at residues 167–225; the sequence is KYRGVARHHHNGRWEARIGRVFGNKYLYLGTYNTQEEAAAAYDMAAIEYRGANAVTNFD. The span at 260 to 274 shows a compositional bias: basic and acidic residues; that stretch reads VETREAKEEPREEVK. Disordered stretches follow at residues 260–297 and 398–422; these read VETR…EQQE and SPPS…TTTT.

This sequence belongs to the AP2/ERF transcription factor family. AP2 subfamily. As to quaternary structure, interacts with KIN10 and KIN11. Post-translationally, ubiquitinated. The phosphorylation at Thr-70 and Ser-166 by KIN10 facilitates its degradation via the proteasomal pathway. As to expression, mostly expressed in siliques, especially in seeds. Also detected in roots and flowers, and, to a lower extent, in leaves stems and seedlings.

The protein resides in the nucleus. Down-regulated by KIN10 that controls its protein stability under a phosphorylation-dependent manner. Functionally, may be involved in the regulation of gene expression by stress factors and by components of stress signal transduction pathways. Transcriptional activator involved in the activation of a subset of sugar-responsive genes and the control of carbon flow from sucrose import to oil accumulation in developing seeds. Binds to the GCC-box pathogenesis-related promoter element. Promotes sugar uptake and seed oil accumulation by glycolysis. Required for embryo development, seed germination and, indirectly, for seedling establishment. Negative regulator of the ABA-mediated germination inhibition. This is Ethylene-responsive transcription factor WRI1 (WRI1) from Arabidopsis thaliana (Mouse-ear cress).